A 713-amino-acid polypeptide reads, in one-letter code: Polyribonucleotide nucleotidyltransferase (713 aa).

The Mg(2+) site is built by aspartate 485 and aspartate 491. The KH domain maps to 552–611 (PRIYTMKIDPKKIKDVIGKGGATVRSLTEETGTSIDIDDDGTVKIAAVDKNAVQEVMSRI). In terms of domain architecture, S1 motif spans 621–689 (GVVYKGKVTR…RQGRIRLTMK (69 aa)). The disordered stretch occupies residues 694–713 (DQTKNEENLLQSEEGSPVQE). Residues 701 to 713 (NLLQSEEGSPVQE) show a composition bias toward polar residues.

This sequence belongs to the polyribonucleotide nucleotidyltransferase family. Component of the RNA degradosome, which is a multiprotein complex involved in RNA processing and mRNA degradation. The cofactor is Mg(2+).

The protein localises to the cytoplasm. It carries out the reaction RNA(n+1) + phosphate = RNA(n) + a ribonucleoside 5'-diphosphate. Its function is as follows. Involved in mRNA degradation. Catalyzes the phosphorolysis of single-stranded polyribonucleotides processively in the 3'- to 5'-direction. This is Polyribonucleotide nucleotidyltransferase from Histophilus somni (strain 2336) (Haemophilus somnus).